A 466-amino-acid polypeptide reads, in one-letter code: Oxysterol-binding protein 4 (466 aa).

Residues 1-12 (MEIGTSSTTNNI) are compositionally biased toward polar residues. The segment at 1–67 (MEIGTSSTTN…STSPPSPPIE (67 aa)) is disordered. Positions 24 to 45 (NNNNHNNNSSNNSSNNNSISSS) are enriched in low complexity. Residues 46–60 (PTDSSQLMNGEQSTS) are compositionally biased toward polar residues.

This sequence belongs to the OSBP family.

This chain is Oxysterol-binding protein 4 (osbD), found in Dictyostelium discoideum (Social amoeba).